The primary structure comprises 229 residues: Germin-like protein 12-2 (229 aa).

Positions 1–22 are cleaved as a signal peptide; the sequence is MASSNFFLLTALIALVATQAMA. Cysteine 32 and cysteine 47 form a disulfide bridge. Residues 62–217 form the Cupin type-1 domain; that stretch reads ANLDKPMDTT…AFQVDKKAVD (156 aa). Asparagine 78 carries an N-linked (GlcNAc...) asparagine glycan. The Mn(2+) site is built by histidine 111, histidine 113, glutamate 118, and histidine 162.

Belongs to the germin family. In terms of assembly, oligomer (believed to be a pentamer but probably hexamer).

The protein localises to the secreted. It localises to the extracellular space. Its subcellular location is the apoplast. In terms of biological role, may play a role in plant defense. Probably has no oxalate oxidase activity even if the active site is conserved. The polypeptide is Germin-like protein 12-2 (Oryza sativa subsp. japonica (Rice)).